Reading from the N-terminus, the 95-residue chain is Aspartyl/glutamyl-tRNA(Asn/Gln) amidotransferase subunit C (95 aa).

This sequence belongs to the GatC family. In terms of assembly, heterotrimer of A, B and C subunits.

It catalyses the reaction L-glutamyl-tRNA(Gln) + L-glutamine + ATP + H2O = L-glutaminyl-tRNA(Gln) + L-glutamate + ADP + phosphate + H(+). It carries out the reaction L-aspartyl-tRNA(Asn) + L-glutamine + ATP + H2O = L-asparaginyl-tRNA(Asn) + L-glutamate + ADP + phosphate + 2 H(+). In terms of biological role, allows the formation of correctly charged Asn-tRNA(Asn) or Gln-tRNA(Gln) through the transamidation of misacylated Asp-tRNA(Asn) or Glu-tRNA(Gln) in organisms which lack either or both of asparaginyl-tRNA or glutaminyl-tRNA synthetases. The reaction takes place in the presence of glutamine and ATP through an activated phospho-Asp-tRNA(Asn) or phospho-Glu-tRNA(Gln). The protein is Aspartyl/glutamyl-tRNA(Asn/Gln) amidotransferase subunit C of Halorhodospira halophila (strain DSM 244 / SL1) (Ectothiorhodospira halophila (strain DSM 244 / SL1)).